We begin with the raw amino-acid sequence, 400 residues long: 3-phenylpropionate/cinnamic acid dioxygenase ferredoxin--NAD(+) reductase component (400 aa).

5–36 (TIIIVGGGQAAAMAAASLRQQGFTGELHLFSD) is a binding site for FAD. 146–174 (SVVIVGAGTIGLELAASATQRRCKVTVIE) is a binding site for NAD(+).

Belongs to the bacterial ring-hydroxylating dioxygenase ferredoxin reductase family. As to quaternary structure, this dioxygenase system consists of four proteins: the two subunits of the hydroxylase component (HcaE and HcaF), a ferredoxin (HcaC) and a ferredoxin reductase (HcaD). FAD serves as cofactor.

The enzyme catalyses 2 reduced [2Fe-2S]-[ferredoxin] + NAD(+) + H(+) = 2 oxidized [2Fe-2S]-[ferredoxin] + NADH. It participates in aromatic compound metabolism; 3-phenylpropanoate degradation. Functionally, part of the multicomponent 3-phenylpropionate dioxygenase, that converts 3-phenylpropionic acid (PP) and cinnamic acid (CI) into 3-phenylpropionate-dihydrodiol (PP-dihydrodiol) and cinnamic acid-dihydrodiol (CI-dihydrodiol), respectively. This chain is 3-phenylpropionate/cinnamic acid dioxygenase ferredoxin--NAD(+) reductase component, found in Escherichia coli O157:H7.